Consider the following 360-residue polypeptide: Phenylalanine--tRNA ligase alpha subunit (360 aa).

Glutamate 260 is a Mg(2+) binding site.

The protein belongs to the class-II aminoacyl-tRNA synthetase family. Phe-tRNA synthetase alpha subunit type 1 subfamily. As to quaternary structure, tetramer of two alpha and two beta subunits. Mg(2+) is required as a cofactor.

The protein localises to the cytoplasm. It carries out the reaction tRNA(Phe) + L-phenylalanine + ATP = L-phenylalanyl-tRNA(Phe) + AMP + diphosphate + H(+). In Bradyrhizobium sp. (strain BTAi1 / ATCC BAA-1182), this protein is Phenylalanine--tRNA ligase alpha subunit.